We begin with the raw amino-acid sequence, 395 residues long: Dual specificity protein phosphatase 4 (395 aa).

Val-2 carries the post-translational modification N-acetylvaline. The Rhodanese domain occupies 42–160 (SGGKCLLLDC…FSSEYPEFCS (119 aa)). The region spanning 196 to 337 (GPVEILPFLY…LLQFESQVLT (142 aa)) is the Tyrosine-protein phosphatase domain. Residue Cys-281 is the Phosphocysteine intermediate of the active site. Phosphoserine; by MAPK is present on residues Ser-387 and Ser-392.

It belongs to the protein-tyrosine phosphatase family. Non-receptor class dual specificity subfamily. In terms of assembly, hollow spherical complex composed of 24 subunits with pseudooctahedral symmetry, has a tetramer as the basic unit. Phosphorylation in the C-terminus by ERK1/2 inhibits proteasomal degradation and stabilizes the protein. As to expression, expressed at moderate levels in nearly all tissues and cells including brain, spleen, and testes with the higher expression in the heart and lung and lower expression in skeletal muscle and kidney. Undetectable in liver. Expressed in many areas of the brain with very strong expression in the hippocampus, piriform cortex, and the suprachiasmatic nucleus.

The protein localises to the nucleus. The enzyme catalyses O-phospho-L-tyrosyl-[protein] + H2O = L-tyrosyl-[protein] + phosphate. It carries out the reaction O-phospho-L-seryl-[protein] + H2O = L-seryl-[protein] + phosphate. The catalysed reaction is O-phospho-L-threonyl-[protein] + H2O = L-threonyl-[protein] + phosphate. Regulates mitogenic signal transduction by dephosphorylating both Thr and Tyr residues on MAP kinases ERK1 and ERK2. The sequence is that of Dual specificity protein phosphatase 4 (Dusp4) from Rattus norvegicus (Rat).